The chain runs to 327 residues: DNA-directed RNA polymerase subunit alpha (327 aa).

The alpha N-terminal domain (alpha-NTD) stretch occupies residues 1–233 (MVREKVKVST…NLFIPFLHVE (233 aa)). The tract at residues 267–327 (LAFQYIFIDQ…KKILDILEKK (61 aa)) is alpha C-terminal domain (alpha-CTD).

The protein belongs to the RNA polymerase alpha chain family. In plastids the minimal PEP RNA polymerase catalytic core is composed of four subunits: alpha, beta, beta', and beta''. When a (nuclear-encoded) sigma factor is associated with the core the holoenzyme is formed, which can initiate transcription.

Its subcellular location is the plastid. The protein resides in the chloroplast. It carries out the reaction RNA(n) + a ribonucleoside 5'-triphosphate = RNA(n+1) + diphosphate. Its function is as follows. DNA-dependent RNA polymerase catalyzes the transcription of DNA into RNA using the four ribonucleoside triphosphates as substrates. The protein is DNA-directed RNA polymerase subunit alpha of Draba nemorosa (Woodland whitlowgrass).